Reading from the N-terminus, the 399-residue chain is Succinate--CoA ligase [ADP-forming] subunit beta (399 aa).

In terms of domain architecture, ATP-grasp spans 9–254; it reads KELLAKYGVG…ETEEDPAEIE (246 aa). ATP contacts are provided by residues Lys46, 53–55, Val112, and Glu117; that span reads GRG. Mg(2+) is bound by residues Asn209 and Asp223. Substrate contacts are provided by residues Asn274 and 331 to 333; that span reads GIM.

It belongs to the succinate/malate CoA ligase beta subunit family. As to quaternary structure, heterotetramer of two alpha and two beta subunits. Mg(2+) serves as cofactor.

It catalyses the reaction succinate + ATP + CoA = succinyl-CoA + ADP + phosphate. The catalysed reaction is GTP + succinate + CoA = succinyl-CoA + GDP + phosphate. The protein operates within carbohydrate metabolism; tricarboxylic acid cycle; succinate from succinyl-CoA (ligase route): step 1/1. Succinyl-CoA synthetase functions in the citric acid cycle (TCA), coupling the hydrolysis of succinyl-CoA to the synthesis of either ATP or GTP and thus represents the only step of substrate-level phosphorylation in the TCA. The beta subunit provides nucleotide specificity of the enzyme and binds the substrate succinate, while the binding sites for coenzyme A and phosphate are found in the alpha subunit. The polypeptide is Succinate--CoA ligase [ADP-forming] subunit beta (Novosphingobium aromaticivorans (strain ATCC 700278 / DSM 12444 / CCUG 56034 / CIP 105152 / NBRC 16084 / F199)).